Consider the following 143-residue polypeptide: Large ribosomal subunit protein uL13c (143 aa).

This sequence belongs to the universal ribosomal protein uL13 family. Part of the 50S ribosomal subunit.

Its subcellular location is the plastid. It localises to the chloroplast. The protein is Large ribosomal subunit protein uL13c of Guillardia theta (Cryptophyte).